The following is a 699-amino-acid chain: DnaJ homolog subfamily C member 14 (699 aa).

The interval 1–230 is disordered; it reads MAQKHPGEGG…RHRLGRKRSQ (230 aa). The span at 75–84 shows a compositional bias: pro residues; that stretch reads HGPPRGPGPP. A compositionally biased stretch (acidic residues) spans 86–102; sequence AEEDPDQSEASSEESGV. Residues 117–133 are compositionally biased toward polar residues; it reads DGNSSFLSIPSTCNCQG. The span at 163–176 shows a compositional bias: acidic residues; it reads GEDEELEGEYDEEE. The span at 203–218 shows a compositional bias: basic and acidic residues; that stretch reads PAKEDTREGGRRDPRS. Over residues 219 to 228 the composition is skewed to basic residues; sequence PGRHRLGRKR. 3 helical membrane-spanning segments follow: residues 251-271, 301-321, and 327-347; these read AGFWWLIELLVLVGEYVETCG, GWAQVMFQFLSQGFCYGAGLF, and LVGALLLLALALLLGCLQLGW. The 65-residue stretch at 444 to 508 folds into the J domain; it reads NPFHVLGVEA…ERRKEYEMKR (65 aa). The interval 655-699 is disordered; the sequence is MSNGNFFAAPQPGPGATAASKPNSTVPKGEAKPKRRKKVRRPFQR. Residues 662-673 show a composition bias toward low complexity; sequence AAPQPGPGATAA. A compositionally biased stretch (basic residues) spans 687 to 699; sequence PKRRKKVRRPFQR.

Interacts with the FxxxFxxxF motif of DRD1 via its C-terminal domain. Interacts with pestivirus nonstructural protein NS2.

It localises to the endoplasmic reticulum membrane. Functionally, regulates the export of target proteins, such as DRD1, from the endoplasmic reticulum to the cell surface. Promotes cleavage of pestivirus polyprotein. In Bos taurus (Bovine), this protein is DnaJ homolog subfamily C member 14 (DNAJC14).